The primary structure comprises 295 residues: uncharacterized protein (295 aa).

A signal peptide spans 1-19 (MHKLLLIITVFFTFNVAQA).

This is an uncharacterized protein from Rickettsia prowazekii (strain Madrid E).